A 447-amino-acid chain; its full sequence is MALLPSMYIRDSADHVGEAVKLAGWVYHKTEKGKLVFIQLRDGTATIQCVVFKKNVSEEVFARAKELTQESSCYIHGTLRADERSSLGFELDVTDIEIVHLTQNYPITPKEHGTQFLMEHRHLWVRSAKQHALLRIRAQVIAAAQEYLNSEHFVRYDSPILTATAAEGTSDLFATEYFDLGNAYLAQTGQLYVESGMATFGRVYCFGPTFRAEKSKTRRHLTEFWMIEPEFAFADQDDNMELQENFVSYIVQRVLDRCEEDLKILERDTSKLENIVPPFPRISYDEAIEKIKQGVAAGATVAPDNAPLADLEWGDDFGAPHETYLASLFDKPLFIYNYPTKVKAFYMQPAEGRPEVVRCADLIAPEGYGEIIGGSQRIHDAELLEARIREHGLDVADYQWYLDLRRYGSVPHSGFGMGIERCVAWLAGTRHIREAIPFPRQLYRIYP.

It belongs to the class-II aminoacyl-tRNA synthetase family. As to quaternary structure, homodimer.

The protein localises to the cytoplasm. It carries out the reaction tRNA(Asn) + L-asparagine + ATP = L-asparaginyl-tRNA(Asn) + AMP + diphosphate + H(+). This Herpetosiphon aurantiacus (strain ATCC 23779 / DSM 785 / 114-95) protein is Asparagine--tRNA ligase.